Consider the following 362-residue polypeptide: Holliday junction branch migration complex subunit RuvB (362 aa).

The segment at 4–186 is large ATPase domain (RuvB-L); the sequence is PDRPQRLVEQ…FGIPLRMQFY (183 aa). Residues Ile-25, Arg-26, Gly-67, Lys-70, Thr-71, Thr-72, 133 to 135, Arg-176, Tyr-186, and Arg-223 contribute to the ATP site; that span reads EDF. Thr-71 is a binding site for Mg(2+). The interval 187-257 is small ATPAse domain (RuvB-S); sequence EPEELQLIVA…AAGGALTRLE (71 aa). The tract at residues 260–362 is head domain (RuvB-H); that stretch reads RLGFDAMDRR…GTPEGEGEDV (103 aa). Residues Arg-296, Arg-315, and Arg-320 each contribute to the DNA site.

It belongs to the RuvB family. As to quaternary structure, homohexamer. Forms an RuvA(8)-RuvB(12)-Holliday junction (HJ) complex. HJ DNA is sandwiched between 2 RuvA tetramers; dsDNA enters through RuvA and exits via RuvB. An RuvB hexamer assembles on each DNA strand where it exits the tetramer. Each RuvB hexamer is contacted by two RuvA subunits (via domain III) on 2 adjacent RuvB subunits; this complex drives branch migration. In the full resolvosome a probable DNA-RuvA(4)-RuvB(12)-RuvC(2) complex forms which resolves the HJ.

It localises to the cytoplasm. It catalyses the reaction ATP + H2O = ADP + phosphate + H(+). Functionally, the RuvA-RuvB-RuvC complex processes Holliday junction (HJ) DNA during genetic recombination and DNA repair, while the RuvA-RuvB complex plays an important role in the rescue of blocked DNA replication forks via replication fork reversal (RFR). RuvA specifically binds to HJ cruciform DNA, conferring on it an open structure. The RuvB hexamer acts as an ATP-dependent pump, pulling dsDNA into and through the RuvAB complex. RuvB forms 2 homohexamers on either side of HJ DNA bound by 1 or 2 RuvA tetramers; 4 subunits per hexamer contact DNA at a time. Coordinated motions by a converter formed by DNA-disengaged RuvB subunits stimulates ATP hydrolysis and nucleotide exchange. Immobilization of the converter enables RuvB to convert the ATP-contained energy into a lever motion, pulling 2 nucleotides of DNA out of the RuvA tetramer per ATP hydrolyzed, thus driving DNA branch migration. The RuvB motors rotate together with the DNA substrate, which together with the progressing nucleotide cycle form the mechanistic basis for DNA recombination by continuous HJ branch migration. Branch migration allows RuvC to scan DNA until it finds its consensus sequence, where it cleaves and resolves cruciform DNA. The protein is Holliday junction branch migration complex subunit RuvB of Rhodospirillum centenum (strain ATCC 51521 / SW).